The sequence spans 380 residues: MFNTSEEVRIVTETIRQAARERIAPAAASVDATGELDGEVLSLLWDLGLMTLVFPPEFGGAEQSQGTLLCTAVEEIARHCASSSLMLIIQAVGSFPLLHGGSRELLERVLPRIVERRELAAYLVSEPGAGSDVGSIRTTAVRDGNEYVISGTKCFSTNGPVASYYTVLARTSENGRNGLSFFLVDGDAPGLKVGKIEKKLGQRGSKTSEMYLDEVRVPAGNLLGEENKGFLLAMKDFDMSRPAIGAQALGIAEGAFDQMLKHSRERKTFGQPLCEHQMIQQIIADSATKIEAARGLIYRAAALYDQGKRNTKLASMGKLFASDAAMQITTDAIQVFGGYGYMQDYPVERMFRDAKLTQIFEGANQIQRLVIAREILKEAA.

Belongs to the acyl-CoA dehydrogenase family. As to quaternary structure, homotetramer. Requires FAD as cofactor.

The enzyme catalyses cyclohexane-1-carbonyl-CoA + oxidized [electron-transfer flavoprotein] + H(+) = cyclohex-1-ene-1-carbonyl-CoA + reduced [electron-transfer flavoprotein]. Acyl-CoA dehydrogenase involved in the anaerobic degradation of cyclohexane carboxylic acid (CHC). Catalyzes the 1,2-dehydrogenation of cyclohexane-1-carbonyl-CoA (CHCoA) to cyclohex-1-ene-1-carbonyl-CoA (CHeneCoA). An alternative substrate, cyclohex-3-ene-1-carboxyl-CoA can be converted to the corresponding cyclohexadiene-1-carboxyl-CoA isomers (30% rate compared to CHC). In Geobacter metallireducens (strain ATCC 53774 / DSM 7210 / GS-15), this protein is Cyclohexane-1-carbonyl-CoA dehydrogenase.